We begin with the raw amino-acid sequence, 245 residues long: 2,3-bisphosphoglycerate-dependent phosphoglycerate mutase (245 aa).

Residues 8 to 15, 21 to 22, R60, 87 to 90, K98, 114 to 115, and 183 to 184 each bind substrate; these read RHGQSLWN, TG, ERHY, RR, and GN. H9 (tele-phosphohistidine intermediate) is an active-site residue. The Proton donor/acceptor role is filled by E87.

The protein belongs to the phosphoglycerate mutase family. BPG-dependent PGAM subfamily.

It carries out the reaction (2R)-2-phosphoglycerate = (2R)-3-phosphoglycerate. It participates in carbohydrate degradation; glycolysis; pyruvate from D-glyceraldehyde 3-phosphate: step 3/5. Functionally, catalyzes the interconversion of 2-phosphoglycerate and 3-phosphoglycerate. In Bacillus thuringiensis subsp. konkukian (strain 97-27), this protein is 2,3-bisphosphoglycerate-dependent phosphoglycerate mutase.